The chain runs to 626 residues: Chaperone protein HtpG (626 aa).

The tract at residues 1-331 (MSETVERHEF…TDDLPLNVSR (331 aa)) is a; substrate-binding. Residues 332–544 (EMLQSTPTLQ…GMGPDLQMQR (213 aa)) form a b region. The c stretch occupies residues 545–626 (LLRRAGRGFG…GTVAKPAESA (82 aa)).

This sequence belongs to the heat shock protein 90 family. Homodimer.

Its subcellular location is the cytoplasm. Molecular chaperone. Has ATPase activity. This chain is Chaperone protein HtpG, found in Methylorubrum populi (strain ATCC BAA-705 / NCIMB 13946 / BJ001) (Methylobacterium populi).